We begin with the raw amino-acid sequence, 346 residues long: Melanoma-associated antigen B3 (346 aa).

The disordered stretch occupies residues 1-35; that stretch reads MPRGQKSTLHAREKRQQTRGQTQDHQGAQITATNK. The segment covering 18–33 has biased composition (polar residues); the sequence is TRGQTQDHQGAQITAT. Positions 111–310 constitute an MAGE domain; it reads LIMKTNMLVQ…SAFQFWYEEA (200 aa).

In terms of tissue distribution, expressed in testis.

The polypeptide is Melanoma-associated antigen B3 (MAGEB3) (Homo sapiens (Human)).